Reading from the N-terminus, the 318-residue chain is DNA-directed RNA polymerase subunit alpha (318 aa).

Residues 1–232 (MAHQRIVGPT…NLFSPLQNVR (232 aa)) form an alpha N-terminal domain (alpha-NTD) region. Residues 246–318 (KMTEVLVEEL…HLPKEKFTKD (73 aa)) form an alpha C-terminal domain (alpha-CTD) region.

This sequence belongs to the RNA polymerase alpha chain family. As to quaternary structure, in plastids the minimal PEP RNA polymerase catalytic core is composed of four subunits: alpha, beta, beta', and beta''. When a (nuclear-encoded) sigma factor is associated with the core the holoenzyme is formed, which can initiate transcription.

It is found in the plastid. The protein resides in the chloroplast. It catalyses the reaction RNA(n) + a ribonucleoside 5'-triphosphate = RNA(n+1) + diphosphate. DNA-dependent RNA polymerase catalyzes the transcription of DNA into RNA using the four ribonucleoside triphosphates as substrates. The sequence is that of DNA-directed RNA polymerase subunit alpha from Chlorokybus atmophyticus (Soil alga).